Here is a 34-residue protein sequence, read N- to C-terminus: Histone H1, sperm (34 aa).

Residues 1–34 form a disordered region; the sequence is PASPQKRAASPRRSPKKSPRKSPKKSPRKRSASP. Residues 9–34 are compositionally biased toward basic residues; that stretch reads ASPRRSPKKSPRKSPKKSPRKRSASP.

Belongs to the histone H1/H5 family. Sperm.

It localises to the nucleus. The protein resides in the chromosome. In terms of biological role, histones H1 are necessary for the condensation of nucleosome chains into higher-order structures. This chain is Histone H1, sperm, found in Strongylocentrotus purpuratus (Purple sea urchin).